We begin with the raw amino-acid sequence, 129 residues long: Lysozyme C (129 aa).

In terms of domain architecture, C-type lysozyme spans 1-129 (KVYGRCELAA…VSVWTRGCRL (129 aa)). Intrachain disulfides connect Cys-6–Cys-127, Cys-30–Cys-115, Cys-64–Cys-80, and Cys-76–Cys-94. Active-site residues include Glu-35 and Asp-52.

It belongs to the glycosyl hydrolase 22 family. As to quaternary structure, monomer.

It localises to the secreted. The catalysed reaction is Hydrolysis of (1-&gt;4)-beta-linkages between N-acetylmuramic acid and N-acetyl-D-glucosamine residues in a peptidoglycan and between N-acetyl-D-glucosamine residues in chitodextrins.. Its function is as follows. Lysozymes have primarily a bacteriolytic function; those in tissues and body fluids are associated with the monocyte-macrophage system and enhance the activity of immunoagents. This is Lysozyme C (LYZ) from Lophura leucomelanos (Kalij pheasant).